The following is a 256-amino-acid chain: Imidazole glycerol phosphate synthase subunit HisF (256 aa).

Active-site residues include Asp-12 and Asp-131.

It belongs to the HisA/HisF family. As to quaternary structure, heterodimer of HisH and HisF.

It is found in the cytoplasm. It catalyses the reaction 5-[(5-phospho-1-deoxy-D-ribulos-1-ylimino)methylamino]-1-(5-phospho-beta-D-ribosyl)imidazole-4-carboxamide + L-glutamine = D-erythro-1-(imidazol-4-yl)glycerol 3-phosphate + 5-amino-1-(5-phospho-beta-D-ribosyl)imidazole-4-carboxamide + L-glutamate + H(+). The protein operates within amino-acid biosynthesis; L-histidine biosynthesis; L-histidine from 5-phospho-alpha-D-ribose 1-diphosphate: step 5/9. IGPS catalyzes the conversion of PRFAR and glutamine to IGP, AICAR and glutamate. The HisF subunit catalyzes the cyclization activity that produces IGP and AICAR from PRFAR using the ammonia provided by the HisH subunit. The protein is Imidazole glycerol phosphate synthase subunit HisF of Pseudomonas putida (strain GB-1).